The primary structure comprises 734 residues: Photosystem I P700 chlorophyll a apoprotein A2 (734 aa).

8 consecutive transmembrane segments (helical) span residues 46–69 (IFAS…FHVA), 135–158 (LYTG…LHLQ), 175–199 (LNHH…HVAI), 273–291 (IAHH…GHMY), 330–353 (VHFQ…QHMY), 369–395 (AALY…IFFI), 417–439 (AIIS…LYVH), and 517–535 (FLVH…LILV). Residues cysteine 559 and cysteine 568 each contribute to the [4Fe-4S] cluster site. 2 helical membrane passes run 575 to 596 (AFYL…YWHW) and 643 to 665 (LSVW…MFLI). Chlorophyll a-binding residues include histidine 654, methionine 662, and tyrosine 670. Tryptophan 671 contributes to the phylloquinone binding site. Residues 707-727 (LVGLAHFSVGYIFTYAAFLIA) traverse the membrane as a helical segment.

It belongs to the PsaA/PsaB family. As to quaternary structure, the PsaA/B heterodimer binds the P700 chlorophyll special pair and subsequent electron acceptors. PSI consists of a core antenna complex that captures photons, and an electron transfer chain that converts photonic excitation into a charge separation. The eukaryotic PSI reaction center is composed of at least 11 subunits. The cofactor is P700 is a chlorophyll a/chlorophyll a' dimer, A0 is one or more chlorophyll a, A1 is one or both phylloquinones and FX is a shared 4Fe-4S iron-sulfur center..

The protein localises to the plastid. It is found in the chloroplast thylakoid membrane. It catalyses the reaction reduced [plastocyanin] + hnu + oxidized [2Fe-2S]-[ferredoxin] = oxidized [plastocyanin] + reduced [2Fe-2S]-[ferredoxin]. PsaA and PsaB bind P700, the primary electron donor of photosystem I (PSI), as well as the electron acceptors A0, A1 and FX. PSI is a plastocyanin-ferredoxin oxidoreductase, converting photonic excitation into a charge separation, which transfers an electron from the donor P700 chlorophyll pair to the spectroscopically characterized acceptors A0, A1, FX, FA and FB in turn. Oxidized P700 is reduced on the lumenal side of the thylakoid membrane by plastocyanin. This Platanus occidentalis (Sycamore) protein is Photosystem I P700 chlorophyll a apoprotein A2.